A 279-amino-acid chain; its full sequence is MEKNCGSGQSKLKALRMHIYFEVDFQEQAQHYQAVLYSRGVTVDLQPIEKLNARFLRLNPDLALCVDENGLWLSANGMKMQPDWKAEIPRLKRATLKSEMIARACQLGEKPVLVDATAGLGHDSLLMAYLGAQIQLVERHPILFTLLEDSKAQAQHDPFLSQFMDRIQLIFADSASYLQQLDQEEKTVDVVYLDPMFPQRDQNQQAIKKQAQVKKQMQLLHLLLPEDGEMDLGDHLLELAKKVAKRVIVKRPRHAIFLANQEPAHQWQGDACRFDAYFQ.

Residues 138-139 (ER) and D194 each bind S-adenosyl-L-methionine.

The protein belongs to the methyltransferase superfamily. RsmJ family.

The protein resides in the cytoplasm. The catalysed reaction is guanosine(1516) in 16S rRNA + S-adenosyl-L-methionine = N(2)-methylguanosine(1516) in 16S rRNA + S-adenosyl-L-homocysteine + H(+). Specifically methylates the guanosine in position 1516 of 16S rRNA. The polypeptide is Ribosomal RNA small subunit methyltransferase J (Acinetobacter baumannii (strain ATCC 17978 / DSM 105126 / CIP 53.77 / LMG 1025 / NCDC KC755 / 5377)).